The chain runs to 482 residues: tRNA sulfurtransferase (482 aa).

Positions E61–I165 constitute a THUMP domain. ATP contacts are provided by residues L183–I184, K265, G287, and Q296. C344 and C456 are oxidised to a cystine. Residues S404–P482 enclose the Rhodanese domain. C456 serves as the catalytic Cysteine persulfide intermediate.

It belongs to the ThiI family.

It localises to the cytoplasm. The catalysed reaction is [ThiI sulfur-carrier protein]-S-sulfanyl-L-cysteine + a uridine in tRNA + 2 reduced [2Fe-2S]-[ferredoxin] + ATP + H(+) = [ThiI sulfur-carrier protein]-L-cysteine + a 4-thiouridine in tRNA + 2 oxidized [2Fe-2S]-[ferredoxin] + AMP + diphosphate. It catalyses the reaction [ThiS sulfur-carrier protein]-C-terminal Gly-Gly-AMP + S-sulfanyl-L-cysteinyl-[cysteine desulfurase] + AH2 = [ThiS sulfur-carrier protein]-C-terminal-Gly-aminoethanethioate + L-cysteinyl-[cysteine desulfurase] + A + AMP + 2 H(+). The protein operates within cofactor biosynthesis; thiamine diphosphate biosynthesis. Catalyzes the ATP-dependent transfer of a sulfur to tRNA to produce 4-thiouridine in position 8 of tRNAs, which functions as a near-UV photosensor. Also catalyzes the transfer of sulfur to the sulfur carrier protein ThiS, forming ThiS-thiocarboxylate. This is a step in the synthesis of thiazole, in the thiamine biosynthesis pathway. The sulfur is donated as persulfide by IscS. The chain is tRNA sulfurtransferase from Aeromonas hydrophila subsp. hydrophila (strain ATCC 7966 / DSM 30187 / BCRC 13018 / CCUG 14551 / JCM 1027 / KCTC 2358 / NCIMB 9240 / NCTC 8049).